The primary structure comprises 70 residues: Movement protein TGBp3 (70 aa).

At 1–4 (MFPR) the chain is on the lumenal side. The chain crosses the membrane as a helical span at residues 5 to 25 (SGLGLAVAAAVVAYLVLLLAQ). Topologically, residues 26–70 (QLYMSNSSQCTIVITGESVSVVGCVYSEAFIELVKGLKPYYHPLG) are cytoplasmic.

The protein belongs to the Tymovirales TGBp3 protein family.

It is found in the host endoplasmic reticulum membrane. Functionally, plays a role in viral cell-to-cell propagation, by facilitating genome transport to neighboring plant cells through plasmosdesmata. May induce the formation of granular vesicles derived from the Endoplasmic reticulum, which align on actin filaments. This is Movement protein TGBp3 from Crataegus (hawthorn).